A 64-amino-acid polypeptide reads, in one-letter code: Large ribosomal subunit protein bL35 (64 aa).

A compositionally biased stretch (basic residues) spans 1–14; that stretch reads MKQKTHKGTAKRIK. A disordered region spans residues 1–48; sequence MKQKTHKGTAKRIKVTGSGKLRREQANRRHLLEGKPSKRTRRLKGTED. Residues 21–36 show a composition bias toward basic and acidic residues; the sequence is LRREQANRRHLLEGKP.

This sequence belongs to the bacterial ribosomal protein bL35 family.

This is Large ribosomal subunit protein bL35 from Corynebacterium aurimucosum (strain ATCC 700975 / DSM 44827 / CIP 107346 / CN-1) (Corynebacterium nigricans).